Here is a 205-residue protein sequence, read N- to C-terminus: Probable molybdenum cofactor guanylyltransferase (205 aa).

Residues 9 to 11, lysine 21, aspartate 66, and aspartate 95 each bind GTP; that span reads LAG. Aspartate 95 contributes to the Mg(2+) binding site.

The protein belongs to the MobA family. It depends on Mg(2+) as a cofactor.

It localises to the cytoplasm. The catalysed reaction is Mo-molybdopterin + GTP + H(+) = Mo-molybdopterin guanine dinucleotide + diphosphate. Its function is as follows. Transfers a GMP moiety from GTP to Mo-molybdopterin (Mo-MPT) cofactor (Moco or molybdenum cofactor) to form Mo-molybdopterin guanine dinucleotide (Mo-MGD) cofactor. This Pelotomaculum thermopropionicum (strain DSM 13744 / JCM 10971 / SI) protein is Probable molybdenum cofactor guanylyltransferase.